The sequence spans 464 residues: tRNA modification GTPase MnmE (464 aa).

Positions 27, 90, and 129 each coordinate (6S)-5-formyl-5,6,7,8-tetrahydrofolate. The TrmE-type G domain occupies 222-384; it reads GIALVLAGSV…LYDKIRSLTC (163 aa). Residues 232–237, 251–257, and 276–279 each bind GTP; these read NVGKSS, SSYAGTT, and DTAG. The Mg(2+) site is built by Ser-236 and Thr-257. Lys-464 contacts (6S)-5-formyl-5,6,7,8-tetrahydrofolate.

This sequence belongs to the TRAFAC class TrmE-Era-EngA-EngB-Septin-like GTPase superfamily. TrmE GTPase family. As to quaternary structure, homodimer. Heterotetramer of two MnmE and two MnmG subunits. It depends on K(+) as a cofactor.

The protein resides in the cytoplasm. Exhibits a very high intrinsic GTPase hydrolysis rate. Involved in the addition of a carboxymethylaminomethyl (cmnm) group at the wobble position (U34) of certain tRNAs, forming tRNA-cmnm(5)s(2)U34. The protein is tRNA modification GTPase MnmE of Borrelia turicatae (strain 91E135).